Reading from the N-terminus, the 213-residue chain is Sclerostin (213 aa).

The N-terminal stretch at 1–28 (MQLSLAPCLACLLVHAAFVAVESQGWQA) is a signal peptide. Residue Asn53 is glycosylated (N-linked (GlcNAc...) asparagine). Disulfide bonds link Cys80/Cys134, Cys94/Cys148, Cys105/Cys165, and Cys109/Cys167. Residues 82–172 (ELHYTRFVTD…ASCKCKRLTR (91 aa)) enclose the CTCK domain. Asn175 carries N-linked (GlcNAc...) asparagine glycosylation. Residues 178–213 (ELKDFGPETARPQKGRKPRPRARGAKANQAELENAY) are disordered. Over residues 190–201 (QKGRKPRPRARG) the composition is skewed to basic residues.

It belongs to the sclerostin family. Interacts with LRP4 (via the extracellular domain); the interaction facilitates the inhibition of Wnt signaling. Interacts with LRP5 (via the first two YWTD-EGF repeat domains); the interaction inhibits Wnt-mediated signaling. Interacts with LRP6.

Its subcellular location is the secreted. In terms of biological role, negative regulator of bone growth that acts through inhibition of Wnt signaling and bone formation. The chain is Sclerostin from Rattus norvegicus (Rat).